A 327-amino-acid chain; its full sequence is Urease accessory protein UreD (327 aa).

Belongs to the UreD family. In terms of assembly, ureD, UreF and UreG form a complex that acts as a GTP-hydrolysis-dependent molecular chaperone, activating the urease apoprotein by helping to assemble the nickel containing metallocenter of UreC. The UreE protein probably delivers the nickel.

It localises to the cytoplasm. In terms of biological role, required for maturation of urease via the functional incorporation of the urease nickel metallocenter. In Yersinia enterocolitica serotype O:8 / biotype 1B (strain NCTC 13174 / 8081), this protein is Urease accessory protein UreD.